A 763-amino-acid chain; its full sequence is MSELLSFALFLASVLIYAWKAGRNTWWFAATLTVLGLFVVLNITLYASDYFTGDGINDAVLYTLTNSLTGAGIGKYILPGVGIVLALTAVFVSLGWILRRRRHHPHHFGYSLLALLLALGSVDASPAFRQITELVKSQTRDGDPDFAIYYKEPAKTIPNPKLNLVYIYGESLERTYFDNEAFPDLTPELGAIKNESMDFSHTMQLPGTDYTIAGMVASQCGIPLFAPFEGNASASVSSFFPQNICLGDILKNSGYQNYFVQGANLRFAGKDVFLKSHGFDHLYGAEELKGVVADPTYRNDWGFYDDTVLDEAWKKFEELSRSGQRFSLFTLTVDTHHPDGFISRTCNRKRYDFDGKQNQSFSAVSCSQENIATFINKIKASPWFKNTVIVVSSDHLAMNNTAWKYLNKQDRNNLFFVLRGDKPQQETLAVKRNTMDNGATVLDILGGDNFLGLGRSSLSGQSMSEIFLNIKEKTLAWKPDIIRLWKFPKEIKAFTIDQDKNTIAFSGSHFRLPLLLRVSDKRVEPLPESEYSAPLRFQLADFAPRDNFVWVDRCYKMARLWAPELSLSTDWCVSQGQLGGEQRVQHVDKPQWQGKTAFKDTVIDMERYKGNVDTLKIVDNDIRYKADSFIFNVAGAPEEVKQFSGISRPESWGRWSNAQLGDEVKIEYNAPLPKKFDLVITAKAYGTNASKPIPVRIGNEEQTMVLGNEVTTTTLHFDNPNSASTVVIVPPEPIATNEGNILGHSPRKLGIGMVEIKVVEREG.

Transmembrane regions (helical) follow at residues 1-21 (MSEL…AWKA), 26-46 (WWFA…ITLY), 77-97 (ILPG…LGWI), and 108-128 (FGYS…SPAF).

This sequence belongs to the OpgB family.

It localises to the cell inner membrane. The enzyme catalyses a phosphatidylglycerol + a membrane-derived-oligosaccharide D-glucose = a 1,2-diacyl-sn-glycerol + a membrane-derived-oligosaccharide 6-(glycerophospho)-D-glucose.. It participates in glycan metabolism; osmoregulated periplasmic glucan (OPG) biosynthesis. Functionally, transfers a phosphoglycerol residue from phosphatidylglycerol to the membrane-bound nascent glucan backbones. The protein is Phosphoglycerol transferase I of Escherichia fergusonii (strain ATCC 35469 / DSM 13698 / CCUG 18766 / IAM 14443 / JCM 21226 / LMG 7866 / NBRC 102419 / NCTC 12128 / CDC 0568-73).